The chain runs to 737 residues: 1,4-alpha-glucan branching enzyme GlgB (737 aa).

Aspartate 399 functions as the Nucleophile in the catalytic mechanism. Catalysis depends on glutamate 452, which acts as the Proton donor.

This sequence belongs to the glycosyl hydrolase 13 family. GlgB subfamily. As to quaternary structure, monomer.

The enzyme catalyses Transfers a segment of a (1-&gt;4)-alpha-D-glucan chain to a primary hydroxy group in a similar glucan chain.. It participates in glycan biosynthesis; glycogen biosynthesis. Functionally, catalyzes the formation of the alpha-1,6-glucosidic linkages in glycogen by scission of a 1,4-alpha-linked oligosaccharide from growing alpha-1,4-glucan chains and the subsequent attachment of the oligosaccharide to the alpha-1,6 position. This chain is 1,4-alpha-glucan branching enzyme GlgB, found in Chlamydia muridarum (strain MoPn / Nigg).